We begin with the raw amino-acid sequence, 66 residues long: Prophage transcriptional regulatory protein (66 aa).

The polypeptide is Prophage transcriptional regulatory protein (croE) (Escherichia coli (strain K12)).